A 212-amino-acid polypeptide reads, in one-letter code: ER lumen protein-retaining receptor 2 (212 aa).

At 1 to 4 the chain is on the lumenal side; sequence MNIF. A helical transmembrane segment spans residues 5 to 24; that stretch reads RLTGDLSHLAAIIILLLKIW. Over 25–32 the chain is Cytoplasmic; the sequence is KSRSCAGI. A helical membrane pass occupies residues 33 to 52; it reads SGKSQILFALVFTTRYLDLL. The segment at 47-48 is interaction with the K-D-E-L motif on target proteins; it reads RY. Residues 53 to 58 lie on the Lumenal side of the membrane; that stretch reads TSFISL. Residues 59 to 79 form a helical membrane-spanning segment; sequence YNTCMKVIYIGCAYATVYLIY. The Cytoplasmic segment spans residues 80–92; the sequence is AKFRATYDGNHDT. The chain crosses the membrane as a helical span at residues 93–110; the sequence is FRAEFLVVPVGGLAFLVN. At 111-116 the chain is on the lumenal side; sequence HDFSPL. Residues 117-135 form a helical membrane-spanning segment; the sequence is EILWTFSIYLESVAILPQL. Residues 136-149 lie on the Cytoplasmic side of the membrane; it reads FMISKTGEAETITT. A helical transmembrane segment spans residues 150–168; sequence HYLFCLGVYRALYLFNWIW. The segment at 159–169 is interaction with the K-D-E-L motif on target proteins; that stretch reads RALYLFNWIWR. Topologically, residues 169–178 are lumenal; it reads RFYFEGFFDM. Residues 179–199 form a helical membrane-spanning segment; the sequence is IAIVAGVVQTILYCDFFYLYV. Residues 200–212 are Cytoplasmic-facing; that stretch reads TKVLKGKKLSLPA. The important for recycling of cargo proteins with the sequence motif K-D-E-L from the Golgi to the endoplasmic reticulum stretch occupies residues 204–207; the sequence is KGKK.

Belongs to the ERD2 family.

It is found in the endoplasmic reticulum membrane. The protein localises to the golgi apparatus membrane. The protein resides in the cytoplasmic vesicle. It localises to the COPI-coated vesicle membrane. Receptor for the C-terminal sequence motif K-D-E-L that is present on endoplasmic reticulum resident proteins and that mediates their recycling from the Golgi back to the endoplasmic reticulum. Binding is pH dependent, and is optimal at pH 5-5.4. The sequence is that of ER lumen protein-retaining receptor 2 (kdelr2) from Danio rerio (Zebrafish).